The following is a 389-amino-acid chain: Aspartate aminotransferase (389 aa).

L-aspartate-binding residues include Gly34 and Asn171. Lys233 bears the N6-(pyridoxal phosphate)lysine mark. Arg362 contributes to the L-aspartate binding site.

It belongs to the class-I pyridoxal-phosphate-dependent aminotransferase family. In terms of assembly, homodimer. Pyridoxal 5'-phosphate is required as a cofactor.

The protein resides in the cytoplasm. It catalyses the reaction L-aspartate + 2-oxoglutarate = oxaloacetate + L-glutamate. This Pyrococcus abyssi (strain GE5 / Orsay) protein is Aspartate aminotransferase (aspC).